The sequence spans 478 residues: GDP-fucose protein O-fucosyltransferase 3 (478 aa).

Over 1–9 (MVRIQRGKL) the chain is Cytoplasmic. A helical; Signal-anchor for type II membrane protein membrane pass occupies residues 10 to 30 (LAFCLCVMATVFLLITLQVVV). Topologically, residues 31 to 478 (ELGKFEGKKF…QEFWALVFKD (448 aa)) are lumenal. N-linked (GlcNAc...) asparagine glycans are attached at residues N110 and N168. Cysteines 389 and 392 form a disulfide.

The protein belongs to the glycosyltransferase 10 family.

It localises to the endoplasmic reticulum membrane. The catalysed reaction is L-threonyl-[protein] + GDP-beta-L-fucose = 3-O-(alpha-L-fucosyl)-L-threonyl-[protein] + GDP + H(+). It carries out the reaction L-seryl-[protein] + GDP-beta-L-fucose = 3-O-(alpha-L-fucosyl)-L-seryl-[protein] + GDP + H(+). Its pathway is protein modification; protein glycosylation. Its function is as follows. Protein O-fucosyltransferase that specifically catalyzes O-fucosylation of serine or threonine residues in EMI domains of target proteins, such as MMRN1, MMRN2 and EMID1. Attaches fucose through an O-glycosidic linkage. O-fucosylation of EMI domain-containing proteins may be required for facilitating protein folding and secretion. May also show alpha-(1,3)-fucosyltransferase activity toward the innermost N-acetyl glucosamine (GlcNAc) residue in biantennary N-glycan acceptors. However, this was tested with a library of synthetic substrates and this activity is unsure in vivo. May be involved in biosynthesis of Lewis X-carrying biantennary N-glycans that regulate neuron stem cell self-renewal during brain development. The chain is GDP-fucose protein O-fucosyltransferase 3 (FUT10) from Bos taurus (Bovine).